Reading from the N-terminus, the 115-residue chain is uncharacterized protein (115 aa).

The signal sequence occupies residues 1 to 20 (MKTFFRTVLFGSLMAVCANS).

This is an uncharacterized protein from Escherichia coli O6:H1 (strain CFT073 / ATCC 700928 / UPEC).